Here is a 799-residue protein sequence, read N- to C-terminus: Elongation factor G, mitochondrial (799 aa).

A mitochondrion-targeting transit peptide spans 1-34; that stretch reads MRCPSLTRLPYRAVSGLPRSVVRLQSQNFLTRRC. The region spanning 97-384 is the tr-type G domain; sequence SRVRNIGIAA…GVVDYLPNPA (288 aa). Residues 106–113, 182–186, and 236–239 contribute to the GTP site; these read AHIDSGKT, DTPGH, and NKMD.

It belongs to the TRAFAC class translation factor GTPase superfamily. Classic translation factor GTPase family. EF-G/EF-2 subfamily.

It localises to the mitochondrion. It participates in protein biosynthesis; polypeptide chain elongation. Its function is as follows. Mitochondrial GTPase that catalyzes the GTP-dependent ribosomal translocation step during translation elongation. During this step, the ribosome changes from the pre-translocational (PRE) to the post-translocational (POST) state as the newly formed A-site-bound peptidyl-tRNA and P-site-bound deacylated tRNA move to the P and E sites, respectively. Catalyzes the coordinated movement of the two tRNA molecules, the mRNA and conformational changes in the ribosome. The polypeptide is Elongation factor G, mitochondrial (mef1) (Aspergillus flavus (strain ATCC 200026 / FGSC A1120 / IAM 13836 / NRRL 3357 / JCM 12722 / SRRC 167)).